Consider the following 400-residue polypeptide: Enoyl-[acyl-carrier-protein] reductase [NADH] 1 (400 aa).

NAD(+) contacts are provided by residues 48–53 (GASSGY), 74–75 (FE), 111–112 (DA), and 139–140 (LA). Tyr225 lines the substrate pocket. Tyr235 (proton donor) is an active-site residue. NAD(+) is bound by residues Lys244 and 273-275 (VVT).

Belongs to the TER reductase family. Monomer.

It carries out the reaction a 2,3-saturated acyl-[ACP] + NAD(+) = a (2E)-enoyl-[ACP] + NADH + H(+). Its pathway is lipid metabolism; fatty acid biosynthesis. Its function is as follows. Involved in the final reduction of the elongation cycle of fatty acid synthesis (FAS II). Catalyzes the reduction of a carbon-carbon double bond in an enoyl moiety that is covalently linked to an acyl carrier protein (ACP). The polypeptide is Enoyl-[acyl-carrier-protein] reductase [NADH] 1 (Vibrio parahaemolyticus serotype O3:K6 (strain RIMD 2210633)).